Consider the following 352-residue polypeptide: Secretion system apparatus protein SsaU (352 aa).

Helical transmembrane passes span 34–54, 89–109, 144–164, and 176–196; these read LIALYLYFHFFTEKMILILIE, LGAGVIVATVGSVFLQVGVVI, LKVIMLSLIFAFFFYYYASTF, and VLVVSSLIKWLWVGVMVFYIV.

Belongs to the type III secretion exporter family.

The protein resides in the cell membrane. Functionally, part of a type III secretion system. This is Secretion system apparatus protein SsaU (ssaU) from Salmonella typhimurium (strain LT2 / SGSC1412 / ATCC 700720).